Reading from the N-terminus, the 402-residue chain is Mannonate dehydratase (402 aa).

The protein belongs to the mannonate dehydratase family. Fe(2+) is required as a cofactor. It depends on Mn(2+) as a cofactor.

It carries out the reaction D-mannonate = 2-dehydro-3-deoxy-D-gluconate + H2O. The protein operates within carbohydrate metabolism; pentose and glucuronate interconversion. Its function is as follows. Catalyzes the dehydration of D-mannonate. The protein is Mannonate dehydratase of Rhizobium meliloti (strain 1021) (Ensifer meliloti).